Here is a 413-residue protein sequence, read N- to C-terminus: Multifunctional CCA protein (413 aa).

Residues Gly8 and Arg11 each contribute to the ATP site. Positions 8 and 11 each coordinate CTP. Mg(2+)-binding residues include Asp21 and Asp23. The ATP site is built by Arg91, Arg141, and Arg144. CTP contacts are provided by Arg91, Arg141, and Arg144. Positions 230–331 (TGAHLLLVLD…VRLLERCDAL (102 aa)) constitute an HD domain.

This sequence belongs to the tRNA nucleotidyltransferase/poly(A) polymerase family. Bacterial CCA-adding enzyme type 1 subfamily. In terms of assembly, monomer. Can also form homodimers and oligomers. Requires Mg(2+) as cofactor. Ni(2+) is required as a cofactor.

The enzyme catalyses a tRNA precursor + 2 CTP + ATP = a tRNA with a 3' CCA end + 3 diphosphate. The catalysed reaction is a tRNA with a 3' CCA end + 2 CTP + ATP = a tRNA with a 3' CCACCA end + 3 diphosphate. Catalyzes the addition and repair of the essential 3'-terminal CCA sequence in tRNAs without using a nucleic acid template. Adds these three nucleotides in the order of C, C, and A to the tRNA nucleotide-73, using CTP and ATP as substrates and producing inorganic pyrophosphate. tRNA 3'-terminal CCA addition is required both for tRNA processing and repair. Also involved in tRNA surveillance by mediating tandem CCA addition to generate a CCACCA at the 3' terminus of unstable tRNAs. While stable tRNAs receive only 3'-terminal CCA, unstable tRNAs are marked with CCACCA and rapidly degraded. The polypeptide is Multifunctional CCA protein (Verminephrobacter eiseniae (strain EF01-2)).